A 402-amino-acid polypeptide reads, in one-letter code: Imidazolonepropionase (402 aa).

The Fe(3+) site is built by His-66 and His-68. His-66 and His-68 together coordinate Zn(2+). 4-imidazolone-5-propanoate contacts are provided by Arg-75, Tyr-138, and His-171. Tyr-138 lines the N-formimidoyl-L-glutamate pocket. His-236 lines the Fe(3+) pocket. His-236 is a binding site for Zn(2+). Residue Gln-239 participates in 4-imidazolone-5-propanoate binding. A Fe(3+)-binding site is contributed by Asp-311. Position 311 (Asp-311) interacts with Zn(2+). Asn-313 and Gly-315 together coordinate N-formimidoyl-L-glutamate. Position 316 (Thr-316) interacts with 4-imidazolone-5-propanoate.

This sequence belongs to the metallo-dependent hydrolases superfamily. HutI family. The cofactor is Zn(2+). Requires Fe(3+) as cofactor.

Its subcellular location is the cytoplasm. It catalyses the reaction 4-imidazolone-5-propanoate + H2O = N-formimidoyl-L-glutamate. It functions in the pathway amino-acid degradation; L-histidine degradation into L-glutamate; N-formimidoyl-L-glutamate from L-histidine: step 3/3. Functionally, catalyzes the hydrolytic cleavage of the carbon-nitrogen bond in imidazolone-5-propanoate to yield N-formimidoyl-L-glutamate. It is the third step in the universal histidine degradation pathway. The sequence is that of Imidazolonepropionase from Pseudomonas paraeruginosa (strain DSM 24068 / PA7) (Pseudomonas aeruginosa (strain PA7)).